We begin with the raw amino-acid sequence, 63 residues long: Hyphancin-3F (63 aa).

The signal sequence occupies residues 1-22 (MNFSRILFFVFACFVALASVSA). Residues 23–26 (APEP) constitute a propeptide, removed by a dipeptidylpeptidase. Leucine 61 is modified (leucine amide).

This sequence belongs to the cecropin family.

Its subcellular location is the secreted. Its function is as follows. Has antibacterial activity. This is Hyphancin-3F from Hyphantria cunea (Fall webworm moth).